The sequence spans 72 residues: Large ribosomal subunit protein bL28 (72 aa).

The protein belongs to the bacterial ribosomal protein bL28 family.

In Chlorobaculum tepidum (strain ATCC 49652 / DSM 12025 / NBRC 103806 / TLS) (Chlorobium tepidum), this protein is Large ribosomal subunit protein bL28.